The primary structure comprises 527 residues: Ribonuclease Y 2 (527 aa).

The chain crosses the membrane as a helical span at residues 2 to 22 (IAMIATAIIGIVAGGGLGWAL). Residues 339 to 432 (QYFHCGEVGW…VIAADAVSGA (94 aa)) enclose the HD domain.

The protein belongs to the RNase Y family.

It localises to the cell membrane. Its function is as follows. Endoribonuclease that initiates mRNA decay. The sequence is that of Ribonuclease Y 2 from Bdellovibrio bacteriovorus (strain ATCC 15356 / DSM 50701 / NCIMB 9529 / HD100).